The sequence spans 600 residues: Epidermal growth factor receptor kinase substrate 8-like protein 3 (600 aa).

Residues 28–155 enclose the PTB domain; sequence QHRVEHLMTC…ALEEELEERP (128 aa). Disordered regions lie at residues 152 to 245 and 429 to 452; these read EERP…PERD and LHFPRDEPYNHNPEYEDSNLPLSS. Residues 204–214 show a composition bias toward low complexity; sequence SERSISPSSRS. Ser238 is subject to Phosphoserine. One can recognise an SH3 domain in the interval 457–516; sequence RAALKMQVLYEFEARNAQELTVAQGEILEVLDQSKRWWLVKNEAGLTGYIPSNILEPLPA.

Belongs to the EPS8 family. In terms of assembly, interacts with ABI1. Part of a complex that contains SOS1, ABI1 and EPS8L2. Interacts with FASLG. As to expression, detected in embryonic gut. Detected in adult testis, placenta, adrenal gland and intestine.

The protein localises to the cytoplasm. The chain is Epidermal growth factor receptor kinase substrate 8-like protein 3 (Eps8l3) from Mus musculus (Mouse).